Reading from the N-terminus, the 429-residue chain is Glutamate-1-semialdehyde 2,1-aminomutase (429 aa).

An N6-(pyridoxal phosphate)lysine modification is found at lysine 265.

The protein belongs to the class-III pyridoxal-phosphate-dependent aminotransferase family. HemL subfamily. As to quaternary structure, homodimer. Pyridoxal 5'-phosphate is required as a cofactor.

The protein localises to the cytoplasm. It carries out the reaction (S)-4-amino-5-oxopentanoate = 5-aminolevulinate. Its pathway is porphyrin-containing compound metabolism; protoporphyrin-IX biosynthesis; 5-aminolevulinate from L-glutamyl-tRNA(Glu): step 2/2. The sequence is that of Glutamate-1-semialdehyde 2,1-aminomutase from Legionella pneumophila subsp. pneumophila (strain Philadelphia 1 / ATCC 33152 / DSM 7513).